The primary structure comprises 698 residues: Macrophomene synthase (698 aa).

Residues 21–340 are terpene cyclase; that stretch reads MEYMYSVPLD…SCDRYSSYRR (320 aa). Aspartate 113 serves as a coordination point for Mg(2+). Residues 113–117 carry the DDXXD 1 motif; the sequence is DNIAE. Positions 242-250 match the NSE/DTE motif; sequence NDFFSFNYE. A prenyltransferase region spans residues 341–696; sequence EKHQMELPIR…IQLALERLRI (356 aa). Positions 368–387 are disordered; the sequence is LPNGKQLDAPTESSGKDLSD. Isopentenyl diphosphate contacts are provided by lysine 417, arginine 420, and histidine 449. Aspartate 456 and aspartate 460 together coordinate Mg(2+). The short motif at 456-460 is the DDXXD 2 element; that stretch reads DDIED. Position 465 (arginine 465) interacts with dimethylallyl diphosphate. Residue arginine 466 participates in isopentenyl diphosphate binding. 6 residues coordinate dimethylallyl diphosphate: lysine 543, threonine 544, glutamine 579, asparagine 586, lysine 596, and lysine 606.

This sequence in the N-terminal section; belongs to the terpene synthase family. In the C-terminal section; belongs to the FPP/GGPP synthase family. As to quaternary structure, hexamer. Requires Mg(2+) as cofactor.

It carries out the reaction 5 isopentenyl diphosphate + dimethylallyl diphosphate = all-trans-hexaprenyl diphosphate + 5 diphosphate. It catalyses the reaction all-trans-hexaprenyl diphosphate = macrophomene + diphosphate. Bifunctional terpene synthase that converts dimethylallyl diphosphate (DMAPP) and isopentenyl diphosphate (IPP) into macrophomene as a single product. The C-terminal prenyltransferase (PT) domain of MpMS catalyzes formation of hexaprenyl diphosphate (HexPP), whereas the N-terminal terpene cyclase (TC) domain catalyzes the cyclization of HexPP to macrophomene. The sequence is that of Macrophomene synthase from Macrophomina phaseolina (strain MS6) (Charcoal rot fungus).